We begin with the raw amino-acid sequence, 255 residues long: MAVGKNKRLSKGKKGLKKRTQDPFSRKDEYSVKAPSTFAVRDVGKTLVNRTTGLKNANDSLKGRIFEVSLADLQNDEDHAFRKVKLRVDEVQGKNCLTNFHGLDFTSDKLRSLVRKWQTLIEANVTVKTTDDYLLRLFAIAFTKRRPNQIKKTTYARSSQIRAIRKKITEIIQREASTRTLAQLTKLIPEVIGREIEKSTHGIYPLQNVHIRKVKLLKSPKFDLGALLALHGESSTDDKGQKVEREFKEQVLESV.

Residues 1 to 18 (MAVGKNKRLSKGKKGLKK) show a composition bias toward basic residues. Residues 1–28 (MAVGKNKRLSKGKKGLKKRTQDPFSRKD) form a disordered region. At alanine 2 the chain carries N-acetylalanine; partial. Basic and acidic residues predominate over residues 19–28 (RTQDPFSRKD).

Belongs to the eukaryotic ribosomal protein eS1 family. Component of the small ribosomal subunit. Mature ribosomes consist of a small (40S) and a large (60S) subunit. The 40S subunit contains about 33 different proteins and 1 molecule of RNA (18S). The 60S subunit contains about 49 different proteins and 3 molecules of RNA (25S, 5.8S and 5S).

The protein localises to the cytoplasm. In Ajellomyces capsulatus (strain G186AR / H82 / ATCC MYA-2454 / RMSCC 2432) (Darling's disease fungus), this protein is Small ribosomal subunit protein eS1.